Reading from the N-terminus, the 422-residue chain is UDP-N-acetylmuramoylalanine--D-glutamate ligase (422 aa).

ATP is bound at residue 102-108 (GTNGKTT).

It belongs to the MurCDEF family.

The protein localises to the cytoplasm. It catalyses the reaction UDP-N-acetyl-alpha-D-muramoyl-L-alanine + D-glutamate + ATP = UDP-N-acetyl-alpha-D-muramoyl-L-alanyl-D-glutamate + ADP + phosphate + H(+). The protein operates within cell wall biogenesis; peptidoglycan biosynthesis. Cell wall formation. Catalyzes the addition of glutamate to the nucleotide precursor UDP-N-acetylmuramoyl-L-alanine (UMA). In Helicobacter pylori (strain ATCC 700392 / 26695) (Campylobacter pylori), this protein is UDP-N-acetylmuramoylalanine--D-glutamate ligase.